We begin with the raw amino-acid sequence, 450 residues long: MSALYMIVGTLVALGVLVTFHEFGHFWVARRCGVKVLRFSVGFGTPLVRWHDRHGTEFVVAAIPLGGYVKMLDEREAEVPAHLLEQSFNRKTVRQRIAIVAAGPIANFLLAILFFWVVALLGSQQVRPVIGSVAPESLAAQAGLEAGQELLAVDGEPVTGWNGVNLQLVRRLGESGTLEVRVQEKGSNVDSTHQVRLDGWLKGEDNPDPIASLGIRPWRPALPPVLAELDPKGPAQAAGLKLGDRLQSIDGIAVDDWQQVVDSVRARPGQRVQLKVLRDGEVLDVALELAVRGEGKARSGYMGAGVAGTEWPAEMLREVSYGPLEAVGQALSRTWTMSLLTLDSIKKMLLGELSVKNLSGPITIAKVAGASAQSGVGDFLNFLAYLSISLGVLNLLPIPVLDGGHLLFYLVEWVRGRPLSERVQAWGMQIGISLVVGVMLLALVNDLSRL.

H21 contributes to the Zn(2+) binding site. E22 is a catalytic residue. H25 contacts Zn(2+). A helical membrane pass occupies residues 97–119; sequence IAIVAAGPIANFLLAILFFWVVA. The 93-residue stretch at 199 to 291 folds into the PDZ domain; that stretch reads GWLKGEDNPD…VLDVALELAV (93 aa). A helical transmembrane segment spans residues 425 to 444; sequence AWGMQIGISLVVGVMLLALV.

It belongs to the peptidase M50B family. Zn(2+) serves as cofactor.

Its subcellular location is the cell inner membrane. This Pseudomonas aeruginosa (strain ATCC 15692 / DSM 22644 / CIP 104116 / JCM 14847 / LMG 12228 / 1C / PRS 101 / PAO1) protein is Putative zinc metalloprotease PA3649.